Reading from the N-terminus, the 315-residue chain is tRNA pseudouridine synthase B (315 aa).

Residue aspartate 54 is the Nucleophile of the active site.

This sequence belongs to the pseudouridine synthase TruB family. Type 1 subfamily.

It carries out the reaction uridine(55) in tRNA = pseudouridine(55) in tRNA. Functionally, responsible for synthesis of pseudouridine from uracil-55 in the psi GC loop of transfer RNAs. The protein is tRNA pseudouridine synthase B of Cupriavidus pinatubonensis (strain JMP 134 / LMG 1197) (Cupriavidus necator (strain JMP 134)).